A 263-amino-acid chain; its full sequence is Protein phosphatase type 2A regulatory subunit RTS3 (263 aa).

Disordered stretches follow at residues 1-62 and 149-176; these read MIAT…AQRR and LPLTPKDSMTHISHSARRSSRNASISNG. The segment covering 46 to 61 has biased composition (low complexity); the sequence is LSTSSSPSSSPMSAQR. Ser172, Ser192, Ser214, and Ser238 each carry phosphoserine.

It is found in the cytoplasm. Its subcellular location is the nucleus. In terms of biological role, may be a component of a protein phosphatase type 2A (PP2A) complex. Negatively regulates SIT4 phosphatase, a modulators of caffeine sensitivity. This Saccharomyces cerevisiae (strain ATCC 204508 / S288c) (Baker's yeast) protein is Protein phosphatase type 2A regulatory subunit RTS3 (RTS3).